The primary structure comprises 150 residues: Cytochrome c-type biogenesis protein CcmE (150 aa).

The Cytoplasmic segment spans residues 1–7; it reads MTRKQKR. A helical; Signal-anchor for type II membrane protein membrane pass occupies residues 8-28; that stretch reads LAIIGGGVGFLTAAVLLVMFA. The Periplasmic segment spans residues 29 to 150; that stretch reads FSQAVAYFYV…VTLGGEENIR (122 aa). 2 residues coordinate heme: His-123 and Tyr-127.

It belongs to the CcmE/CycJ family.

The protein resides in the cell inner membrane. Heme chaperone required for the biogenesis of c-type cytochromes. Transiently binds heme delivered by CcmC and transfers the heme to apo-cytochromes in a process facilitated by CcmF and CcmH. This chain is Cytochrome c-type biogenesis protein CcmE, found in Sinorhizobium medicae (strain WSM419) (Ensifer medicae).